The chain runs to 154 residues: Ribonuclease H (154 aa).

The RNase H type-1 domain occupies 1–142 (MLKKIDLYTD…CDELAREAAS (142 aa)). Mg(2+) is bound by residues Asp-10, Glu-48, Asp-70, and Asp-134. A disordered region spans residues 133-154 (CDELAREAASGKQLAEDTGYQP).

This sequence belongs to the RNase H family. Monomer. The cofactor is Mg(2+).

Its subcellular location is the cytoplasm. It carries out the reaction Endonucleolytic cleavage to 5'-phosphomonoester.. In terms of biological role, endonuclease that specifically degrades the RNA of RNA-DNA hybrids. In Aeromonas hydrophila subsp. hydrophila (strain ATCC 7966 / DSM 30187 / BCRC 13018 / CCUG 14551 / JCM 1027 / KCTC 2358 / NCIMB 9240 / NCTC 8049), this protein is Ribonuclease H.